The chain runs to 37 residues: Cytochrome b6-f complex subunit 5 (37 aa).

The helical transmembrane segment at L5–A25 threads the bilayer.

It belongs to the PetG family. As to quaternary structure, the 4 large subunits of the cytochrome b6-f complex are cytochrome b6, subunit IV (17 kDa polypeptide, PetD), cytochrome f and the Rieske protein, while the 4 small subunits are PetG, PetL, PetM and PetN. The complex functions as a dimer.

It is found in the plastid membrane. Functionally, component of the cytochrome b6-f complex, which mediates electron transfer between photosystem II (PSII) and photosystem I (PSI), cyclic electron flow around PSI, and state transitions. PetG is required for either the stability or assembly of the cytochrome b6-f complex. The protein is Cytochrome b6-f complex subunit 5 of Aneura mirabilis (Parasitic liverwort).